The primary structure comprises 421 residues: UDP-N-acetylglucosamine 1-carboxyvinyltransferase (421 aa).

Phosphoenolpyruvate is bound at residue 22 to 23 (KN). Arg91 is a binding site for UDP-N-acetyl-alpha-D-glucosamine. Catalysis depends on Cys115, which acts as the Proton donor. Cys115 carries the 2-(S-cysteinyl)pyruvic acid O-phosphothioketal modification. UDP-N-acetyl-alpha-D-glucosamine contacts are provided by residues 120 to 124 (RPIDL), Asp306, and Ile328.

This sequence belongs to the EPSP synthase family. MurA subfamily.

Its subcellular location is the cytoplasm. The enzyme catalyses phosphoenolpyruvate + UDP-N-acetyl-alpha-D-glucosamine = UDP-N-acetyl-3-O-(1-carboxyvinyl)-alpha-D-glucosamine + phosphate. It functions in the pathway cell wall biogenesis; peptidoglycan biosynthesis. Its function is as follows. Cell wall formation. Adds enolpyruvyl to UDP-N-acetylglucosamine. In Methylacidiphilum infernorum (isolate V4) (Methylokorus infernorum (strain V4)), this protein is UDP-N-acetylglucosamine 1-carboxyvinyltransferase.